Consider the following 643-residue polypeptide: Extracellular metalloproteinase 4 (643 aa).

Positions 1 to 18 are cleaved as a signal peptide; sequence MHGLMLAGLLALPLSVLG. The propeptide occupies 19-254; that stretch reads HPTESHSSGI…VHSVVDYVSA (236 aa). The segment covering 47 to 57 has biased composition (basic and acidic residues); the sequence is TKSDAVPKQDG. The interval 47–73 is disordered; the sequence is TKSDAVPKQDGESFTTSSTGNDNSSSG. Over residues 61 to 73 the composition is skewed to low complexity; it reads TTSSTGNDNSSSG. N-linked (GlcNAc...) asparagine glycosylation is found at asparagine 271 and asparagine 420. Histidine 437 contacts Zn(2+). Glutamate 438 is a catalytic residue. A Zn(2+)-binding site is contributed by histidine 441. N-linked (GlcNAc...) asparagine glycans are attached at residues asparagine 603 and asparagine 629.

The protein belongs to the peptidase M36 family. The cofactor is Zn(2+).

It is found in the secreted. Secreted metalloproteinase probably acting as a virulence factor. This Trichophyton rubrum (Athlete's foot fungus) protein is Extracellular metalloproteinase 4 (MEP4).